We begin with the raw amino-acid sequence, 418 residues long: MLHPRARTMLLLSLPAVAIGITSSLILIMVMKIASVLQNLLWQRLPGTLGIAQDSPLWIIGVLTLTGIAVGLVIRFSQGHAGPDPACEPLIGAPIPPSALPGLIVALILGLAGGVSLGPEHPIITVNIALAVAIGARLLPRVNRMEWTILASAGTIGALFGTTVAAALIFSQTLNGSNEVPLWDRLFAPLMAAAAGALTTGLFFHPHFSLPIAHYGQMEMTDILSGAIVAAIAIAAGMVAVWCLPRLHAMMHQMKNPVFVLGIGGFILGILGVIGGPVSLFKGLDEMQQMVANQAFSTSDYFLLAVIKLAALVVAAASGFRGGRIFPAVFVGVALGLMLHEHVPAVPAAITVSCAILGIVLVVTRDGWLSLFMAAVVVPNTTLLPLLCIVMLPAWLLLAGKPMMMVNRPKQQPPHDNV.

Helical transmembrane passes span 10 to 30 (LLLS…LIMV), 54 to 74 (DSPL…GLVI), 99 to 119 (ALPG…SLGP), 120 to 140 (EHPI…RLLP), 149 to 169 (ILAS…AALI), 186 to 206 (LFAP…FFHP), 223 to 243 (ILSG…AVWC), 258 to 278 (VFVL…GGPV), 300 to 320 (DYFL…ASGF), 322 to 342 (GGRI…LHEH), 343 to 363 (VPAV…VLVV), and 371 to 391 (LFMA…CIVM).

The protein belongs to the chloride channel (TC 2.A.49) family.

It localises to the cell membrane. This is Putative ion-transport protein YfeO from Escherichia coli O127:H6 (strain E2348/69 / EPEC).